Consider the following 129-residue polypeptide: Glutaredoxin-like protein ECU08_1380 (129 aa).

The Glutaredoxin domain maps to 26 to 126 (EADYGEMVRR…PLLTQNREPV (101 aa)).

Belongs to the glutaredoxin family.

The protein resides in the cytoplasm. In terms of biological role, has a glutathione-disulfide oxidoreductase activity in the presence of NADPH and glutathione reductase. Reduces low molecular weight disulfides and proteins. The chain is Glutaredoxin-like protein ECU08_1380 from Encephalitozoon cuniculi (strain GB-M1) (Microsporidian parasite).